The primary structure comprises 91 residues: Elongation factor 1-beta (91 aa).

Belongs to the EF-1-beta/EF-1-delta family.

Promotes the exchange of GDP for GTP in EF-1-alpha/GDP, thus allowing the regeneration of EF-1-alpha/GTP that could then be used to form the ternary complex EF-1-alpha/GTP/AAtRNA. This chain is Elongation factor 1-beta, found in Metallosphaera sedula (strain ATCC 51363 / DSM 5348 / JCM 9185 / NBRC 15509 / TH2).